A 428-amino-acid chain; its full sequence is Enolase (428 aa).

(2R)-2-phosphoglycerate is bound at residue Q162. E204 acts as the Proton donor in catalysis. Mg(2+) is bound by residues D241, E288, and D315. (2R)-2-phosphoglycerate contacts are provided by K340, R369, S370, and K391. K340 functions as the Proton acceptor in the catalytic mechanism.

The protein belongs to the enolase family. The cofactor is Mg(2+).

It localises to the cytoplasm. Its subcellular location is the secreted. It is found in the cell surface. The enzyme catalyses (2R)-2-phosphoglycerate = phosphoenolpyruvate + H2O. It participates in carbohydrate degradation; glycolysis; pyruvate from D-glyceraldehyde 3-phosphate: step 4/5. Catalyzes the reversible conversion of 2-phosphoglycerate (2-PG) into phosphoenolpyruvate (PEP). It is essential for the degradation of carbohydrates via glycolysis. The polypeptide is Enolase (Azobacteroides pseudotrichonymphae genomovar. CFP2).